We begin with the raw amino-acid sequence, 101 residues long: Cysteine-rich PDZ-binding protein (101 aa).

Belongs to the CRIPT family. In terms of assembly, component of the minor spliceosome, which splices U12-type introns.

Its subcellular location is the cytoplasm. As a component of the minor spliceosome, involved in the splicing of U12-type introns in pre-mRNAs. The chain is Cysteine-rich PDZ-binding protein (CRIPT) from Gallus gallus (Chicken).